We begin with the raw amino-acid sequence, 204 residues long: Holliday junction branch migration complex subunit RuvA (204 aa).

The segment at 1-64 (MIGRLCGTAE…EDAITLFGFI (64 aa)) is domain I. Positions 65–143 (DAAERDWFRL…AMPTGSAFIP (79 aa)) are domain II. The flexible linker stretch occupies residues 144 to 154 (TGTAPPVAPPQ). The interval 154–204 (QGKLADALSALVNLGYRRAEAEAALSAVQAEAGEDAALDELIRGGLRRLAR) is domain III.

Belongs to the RuvA family. Homotetramer. Forms an RuvA(8)-RuvB(12)-Holliday junction (HJ) complex. HJ DNA is sandwiched between 2 RuvA tetramers; dsDNA enters through RuvA and exits via RuvB. An RuvB hexamer assembles on each DNA strand where it exits the tetramer. Each RuvB hexamer is contacted by two RuvA subunits (via domain III) on 2 adjacent RuvB subunits; this complex drives branch migration. In the full resolvosome a probable DNA-RuvA(4)-RuvB(12)-RuvC(2) complex forms which resolves the HJ.

The protein resides in the cytoplasm. Functionally, the RuvA-RuvB-RuvC complex processes Holliday junction (HJ) DNA during genetic recombination and DNA repair, while the RuvA-RuvB complex plays an important role in the rescue of blocked DNA replication forks via replication fork reversal (RFR). RuvA specifically binds to HJ cruciform DNA, conferring on it an open structure. The RuvB hexamer acts as an ATP-dependent pump, pulling dsDNA into and through the RuvAB complex. HJ branch migration allows RuvC to scan DNA until it finds its consensus sequence, where it cleaves and resolves the cruciform DNA. The chain is Holliday junction branch migration complex subunit RuvA from Acidiphilium cryptum (strain JF-5).